The primary structure comprises 450 residues: Probable ECA polymerase (450 aa).

11 helical membrane-spanning segments follow: residues 6 to 26 (FSGL…LTWF), 37 to 57 (VFFS…TSVL), 63 to 83 (VGVA…CFYA), 118 to 138 (VILM…NGFL), 155 to 175 (GVAL…VYFL), 181 to 201 (AWLF…MIVG), 207 to 227 (IIIA…ISLW), 228 to 248 (MLAA…LKRY), 341 to 361 (LVVM…GLII), 378 to 398 (YKAA…IVLA), and 410 to 430 (VFFI…YWLF).

This sequence belongs to the WzyE family. In terms of assembly, probably part of a complex composed of WzxE, WzyE and WzzE.

Its subcellular location is the cell inner membrane. Its pathway is bacterial outer membrane biogenesis; enterobacterial common antigen biosynthesis. Probably involved in the polymerization of enterobacterial common antigen (ECA) trisaccharide repeat units. This Escherichia coli O7:K1 (strain IAI39 / ExPEC) protein is Probable ECA polymerase.